A 1097-amino-acid polypeptide reads, in one-letter code: DNA-directed RNA polymerase subunit beta (1097 aa).

The segment at 1072–1097 (QDVNPRRSTPSRPTYESLGVADYDED) is disordered.

This sequence belongs to the RNA polymerase beta chain family. As to quaternary structure, in cyanobacteria the RNAP catalytic core is composed of 2 alpha, 1 beta, 1 beta', 1 gamma and 1 omega subunit. When a sigma factor is associated with the core the holoenzyme is formed, which can initiate transcription.

It carries out the reaction RNA(n) + a ribonucleoside 5'-triphosphate = RNA(n+1) + diphosphate. In terms of biological role, DNA-dependent RNA polymerase catalyzes the transcription of DNA into RNA using the four ribonucleoside triphosphates as substrates. In Synechococcus sp. (strain CC9902), this protein is DNA-directed RNA polymerase subunit beta.